We begin with the raw amino-acid sequence, 242 residues long: MKKIIIGNWKMNKTVSETRDFIQKFDIFYQENVGKIKEDLDFAIAPSFISLSLISKSLTKKLEIAAQNLSQFDSGAFTGEISGKMLQDLGTKYVIIGHSERREIFKEKDEELKNKILQAQKYDLIPVFCVGESLLEFEAGLTKKVIISQINAIKSVLNFQKAIIAYEPIWAIGTGKTATAAIAEKVCGMIKENFGKDTTVIYGGSVNSKNINELVSQKSIDGALVGGASLDPEEFGKILVNS.

8–10 (NWK) lines the substrate pocket. H98 serves as the catalytic Electrophile. Catalysis depends on E167, which acts as the Proton acceptor. Residues G173, S205, and 226–227 (GG) each bind substrate.

Belongs to the triosephosphate isomerase family. In terms of assembly, homodimer.

Its subcellular location is the cytoplasm. It catalyses the reaction D-glyceraldehyde 3-phosphate = dihydroxyacetone phosphate. It participates in carbohydrate biosynthesis; gluconeogenesis. The protein operates within carbohydrate degradation; glycolysis; D-glyceraldehyde 3-phosphate from glycerone phosphate: step 1/1. Its function is as follows. Involved in the gluconeogenesis. Catalyzes stereospecifically the conversion of dihydroxyacetone phosphate (DHAP) to D-glyceraldehyde-3-phosphate (G3P). In Mesomycoplasma hyopneumoniae (strain 7448) (Mycoplasma hyopneumoniae), this protein is Triosephosphate isomerase.